Consider the following 127-residue polypeptide: Small ribosomal subunit protein uS11 (127 aa).

The protein belongs to the universal ribosomal protein uS11 family. Part of the 30S ribosomal subunit. Interacts with proteins S7 and S18. Binds to IF-3.

Located on the platform of the 30S subunit, it bridges several disparate RNA helices of the 16S rRNA. Forms part of the Shine-Dalgarno cleft in the 70S ribosome. The chain is Small ribosomal subunit protein uS11 from Streptococcus agalactiae serotype Ia (strain ATCC 27591 / A909 / CDC SS700).